Here is a 531-residue protein sequence, read N- to C-terminus: Sterol 26-hydroxylase, mitochondrial (531 aa).

A mitochondrion-targeting transit peptide spans 1–33 (MAALGCARLRWALRGAGRGLCPHGARAKAAIPA). Lys283 is subject to N6-acetyllysine. Positions 384 to 398 (PLLKAVLKETLRLYP) are sterol-binding. Cys476 is a binding site for heme. N6-acetyllysine occurs at positions 509 and 520.

Belongs to the cytochrome P450 family. As to quaternary structure, interacts with HSP70; this interaction is required for initial targeting to mitochondria. The cofactor is heme. As to expression, expressed in the neural retina and underlying retinal pigment epithelium (at protein level). Expressed in the gray and white matter of cerebellum (at protein level).

Its subcellular location is the mitochondrion inner membrane. The catalysed reaction is 5beta-cholestane-3alpha,7alpha,12alpha-triol + 6 reduced [adrenodoxin] + 3 O2 + 5 H(+) = (25R)-3alpha,7alpha,12alpha-trihydroxy-5beta-cholestan-26-oate + 6 oxidized [adrenodoxin] + 4 H2O. The enzyme catalyses cholestanol + 2 reduced [adrenodoxin] + O2 + 2 H(+) = (25R)-26-hydroxycholestanol + 2 oxidized [adrenodoxin] + H2O. It catalyses the reaction (25R)-3beta-hydroxycholest-5-en-7-one-26-al + 2 reduced [adrenodoxin] + O2 + H(+) = (25R)-3beta-hydroxycholest-5-en-7-one-26-oate + 2 oxidized [adrenodoxin] + H2O. It carries out the reaction (25R)-3beta,26-dihydroxycholest-5-en-7-one + 2 reduced [adrenodoxin] + O2 + 2 H(+) = (25R)-3beta-hydroxycholest-5-en-7-one-26-al + 2 oxidized [adrenodoxin] + 2 H2O. The catalysed reaction is 7-oxocholesterol + 2 reduced [adrenodoxin] + O2 + 2 H(+) = (25R)-3beta,26-dihydroxycholest-5-en-7-one + 2 oxidized [adrenodoxin] + H2O. The enzyme catalyses calciol + 2 reduced [adrenodoxin] + O2 + 2 H(+) = calcidiol + 2 oxidized [adrenodoxin] + H2O. It catalyses the reaction (25R)-5beta-cholestane-3alpha,7alpha,12alpha,26-tetrol + 2 reduced [adrenodoxin] + O2 + 2 H(+) = (25R)-3alpha,7alpha,12alpha-trihydroxy-5beta-cholestan-26-al + 2 oxidized [adrenodoxin] + 2 H2O. It carries out the reaction 2 reduced [adrenodoxin] + cholesterol + O2 + 2 H(+) = (25R)-cholest-5-ene-3beta,26-diol + 2 oxidized [adrenodoxin] + H2O. The catalysed reaction is (25R)-3beta,4beta-dihydroxycholest-5-en-26-al + 2 reduced [adrenodoxin] + O2 + H(+) = (25R)-3beta,4beta-dihydroxycholest-5-en-26-oate + 2 oxidized [adrenodoxin] + H2O. The enzyme catalyses (25R)-4beta,26-dihydroxycholesterol + 2 reduced [adrenodoxin] + O2 + 2 H(+) = (25R)-3beta,4beta-dihydroxycholest-5-en-26-al + 2 oxidized [adrenodoxin] + 2 H2O. It catalyses the reaction 4beta-hydroxycholesterol + 2 reduced [adrenodoxin] + O2 + 2 H(+) = (25R)-4beta,26-dihydroxycholesterol + 2 oxidized [adrenodoxin] + H2O. It carries out the reaction (25R)-3beta-hydroxy-5-cholesten-26-al + 2 reduced [adrenodoxin] + O2 + H(+) = (25R)-3beta-hydroxy-5-cholestenoate + 2 oxidized [adrenodoxin] + H2O. The catalysed reaction is (25R)-cholest-5-ene-3beta,26-diol + 2 reduced [adrenodoxin] + O2 + 2 H(+) = (25R)-3beta-hydroxy-5-cholesten-26-al + 2 oxidized [adrenodoxin] + 2 H2O. The enzyme catalyses (25R)-3alpha,7alpha,12alpha-trihydroxy-5beta-cholestan-26-al + 2 reduced [adrenodoxin] + O2 + H(+) = (25R)-3alpha,7alpha,12alpha-trihydroxy-5beta-cholestan-26-oate + 2 oxidized [adrenodoxin] + H2O. It catalyses the reaction 5beta-cholestane-3alpha,7alpha,12alpha-triol + 2 reduced [adrenodoxin] + O2 + 2 H(+) = (25R)-5beta-cholestane-3alpha,7alpha,12alpha,26-tetrol + 2 oxidized [adrenodoxin] + H2O. The protein operates within hormone biosynthesis; cholecalciferol biosynthesis. It functions in the pathway steroid metabolism; cholesterol degradation. It participates in lipid metabolism; bile acid biosynthesis. Its function is as follows. Cytochrome P450 monooxygenase that catalyzes regio- and stereospecific hydroxylation of cholesterol and its derivatives. Hydroxylates (with R stereochemistry) the terminal methyl group of cholesterol side-chain in a three step reaction to yield at first a C26 alcohol, then a C26 aldehyde and finally a C26 acid. Regulates cholesterol homeostasis by catalyzing the conversion of excess cholesterol to bile acids via both the 'neutral' (classic) and the 'acid' (alternative) pathways. May also regulate cholesterol homeostasis via generation of active oxysterols, which act as ligands for NR1H2 and NR1H3 nuclear receptors, modulating the transcription of genes involved in lipid metabolism. Plays a role in cholestanol metabolism in the cerebellum. Similarly to cholesterol, hydroxylates cholestanol and may facilitate sterol diffusion through the blood-brain barrier to the systemic circulation for further degradation. Also hydroxylates retinal 7-ketocholesterol, a noxious oxysterol with pro-inflammatory and pro-apoptotic effects, and may play a role in its elimination from the retinal pigment epithelium. May play a redundant role in vitamin D biosynthesis. Catalyzes 25-hydroxylation of vitamin D3 that is required for its conversion to a functionally active form. The chain is Sterol 26-hydroxylase, mitochondrial from Homo sapiens (Human).